A 126-amino-acid chain; its full sequence is UPF0102 protein PMT_0624 (126 aa).

It belongs to the UPF0102 family.

This chain is UPF0102 protein PMT_0624, found in Prochlorococcus marinus (strain MIT 9313).